Reading from the N-terminus, the 654-residue chain is DNA ligase (654 aa).

NAD(+) is bound by residues 34 to 38, 83 to 84, and E114; these read DLEYD and SL. K116 acts as the N6-AMP-lysine intermediate in catalysis. The NAD(+) site is built by R137, E171, K280, and K304. The Zn(2+) site is built by C396, C399, C414, and C419. The 78-residue stretch at 577 to 654 folds into the BRCT domain; that stretch reads VISTILSGYT…EEQFYDLIKQ (78 aa).

It belongs to the NAD-dependent DNA ligase family. LigA subfamily. The cofactor is Mg(2+). It depends on Mn(2+) as a cofactor.

The catalysed reaction is NAD(+) + (deoxyribonucleotide)n-3'-hydroxyl + 5'-phospho-(deoxyribonucleotide)m = (deoxyribonucleotide)n+m + AMP + beta-nicotinamide D-nucleotide.. In terms of biological role, DNA ligase that catalyzes the formation of phosphodiester linkages between 5'-phosphoryl and 3'-hydroxyl groups in double-stranded DNA using NAD as a coenzyme and as the energy source for the reaction. It is essential for DNA replication and repair of damaged DNA. The chain is DNA ligase from Mycoplasmopsis agalactiae (strain NCTC 10123 / CIP 59.7 / PG2) (Mycoplasma agalactiae).